Consider the following 152-residue polypeptide: Bacchus (152 aa).

A compositionally biased stretch (basic and acidic residues) spans 29–41; sequence DLKAKAAAEDKAA. Residues 29–152 are disordered; that stretch reads DLKAKAAAED…DDGSGSDDQA (124 aa). Residues 42 to 51 show a composition bias toward low complexity; that stretch reads AADAAGDAAD. The segment covering 72–89 has biased composition (basic and acidic residues); the sequence is ESVKGTKRPAEAKSAESK. Residues 99–152 show a composition bias toward acidic residues; the sequence is GDSDEEEALEEIIEGDSEIESDEYDIPYDGEEDDIECDDDDDDNDDGSGSDDQA.

In terms of tissue distribution, expressed in the brain.

The protein resides in the nucleus. Functionally, negatively regulates tyramine beta-hydroxylase tbh and thus the conversion of tyramine (TA) to octopamine (OA). In tyrosine decarboxylase 2 (Tdc2) neurons, acts in an amine-mediated signaling pathway to negatively regulate acute ethanol sensitivity probably via tbh-mediated depletion of TA. The protein is Bacchus of Drosophila melanogaster (Fruit fly).